We begin with the raw amino-acid sequence, 243 residues long: Orotidine 5'-phosphate decarboxylase (243 aa).

Residues aspartate 12, lysine 34, 61–70 (DLKFHDIPNT), threonine 125, arginine 187, glutamine 196, glycine 216, and arginine 217 each bind substrate. The active-site Proton donor is the lysine 63.

Belongs to the OMP decarboxylase family. Type 1 subfamily. In terms of assembly, homodimer.

It catalyses the reaction orotidine 5'-phosphate + H(+) = UMP + CO2. The protein operates within pyrimidine metabolism; UMP biosynthesis via de novo pathway; UMP from orotate: step 2/2. In terms of biological role, catalyzes the decarboxylation of orotidine 5'-monophosphate (OMP) to uridine 5'-monophosphate (UMP). This Heliobacterium modesticaldum (strain ATCC 51547 / Ice1) protein is Orotidine 5'-phosphate decarboxylase.